Reading from the N-terminus, the 729-residue chain is Oligopeptide transporter 4 (729 aa).

Residue Ala-2 is modified to N-acetylalanine. The residue at position 8 (Ser-8) is a Phosphoserine. Helical transmembrane passes span 37 to 57, 61 to 81, 123 to 143, 148 to 168, 177 to 194, 207 to 227, 256 to 276, 279 to 299, 352 to 372, 410 to 430, 438 to 458, 522 to 542, 592 to 612, 621 to 637, 640 to 660, and 673 to 693; these read MWFL…FFSY, PLVI…HFLA, AFGS…AFYG, FIAG…WAGL, AHMW…FRAL, FFVI…YLFT, GLGA…SPLI, FFAI…VLPL, LSMF…STLT, WWFY…CVFL, WWGL…ISII, FLVQ…VAWW, YAAM…VWSL, WIPL…TAMM, ATAV…LFVF, and VLSA…YFSV.

It belongs to the oligopeptide OPT transporter (TC 2.A.67.1) family. Expressed in flowers, leaves, roots, and stems.

The protein resides in the membrane. In terms of biological role, involved in the translocation of tetra- and pentapeptides across the cellular membrane in an energy-dependent manner. The chain is Oligopeptide transporter 4 (OPT4) from Arabidopsis thaliana (Mouse-ear cress).